We begin with the raw amino-acid sequence, 428 residues long: Cysteine--tRNA ligase (428 aa).

Cys-23 contacts Zn(2+). Positions 25 to 35 (PTVYNDLHLGN) match the 'HIGH' region motif. Zn(2+) is bound by residues Cys-196, His-221, and Glu-225. Positions 253–257 (KMSKS) match the 'KMSKS' region motif. Lys-256 contacts ATP.

This sequence belongs to the class-I aminoacyl-tRNA synthetase family. As to quaternary structure, monomer. Zn(2+) serves as cofactor.

The protein resides in the cytoplasm. It carries out the reaction tRNA(Cys) + L-cysteine + ATP = L-cysteinyl-tRNA(Cys) + AMP + diphosphate. The chain is Cysteine--tRNA ligase (cysS) from Mycoplasma genitalium (strain ATCC 33530 / DSM 19775 / NCTC 10195 / G37) (Mycoplasmoides genitalium).